The chain runs to 259 residues: Protein LEAD-SENSITIVE 1 (259 aa).

Residues 20-168 (YSWRTAYIYA…CKTALLVLEG (149 aa)) enclose the LRAT domain. Catalysis depends on residues His-30 and His-42. The active-site Acyl-thioester intermediate is the Cys-152.

As to expression, highly expressed in inflorescences, siliques and stems, and, to a lower extent, in roots and leaves.

Its subcellular location is the cytoplasm. Functionally, confers tolerance to lead ions (Pb) stress mediated by Pb(NO(3))(2) probably by promoting Pb accumulation leading to subsequent glutathione-dependent phytochelatin (PC) synthesis and related gene expression, including PDR12/ABCG40, GSH1, GSH2, GR1, GR2, PCS1 and PCS2. This is Protein LEAD-SENSITIVE 1 from Arabidopsis thaliana (Mouse-ear cress).